We begin with the raw amino-acid sequence, 162 residues long: Beta-lactoglobulin-1 (162 aa).

2 disulfides stabilise this stretch: C66–C160 and C106–C119.

This sequence belongs to the calycin superfamily. Lipocalin family. Monomer. As to expression, synthesized in mammary gland and secreted in milk.

It is found in the secreted. Functionally, primary component of whey, it binds retinol and is probably involved in the transport of that molecule. This is Beta-lactoglobulin-1 (LGB1) from Equus asinus (Donkey).